Reading from the N-terminus, the 201-residue chain is Putative tRNA-binding protein YtpR (201 aa).

One can recognise a tRNA-binding domain in the interval 90–200 (VDLSPKFVVG…GDYEAGDAFQ (111 aa)).

In Bacillus subtilis (strain 168), this protein is Putative tRNA-binding protein YtpR (ytpR).